A 276-amino-acid polypeptide reads, in one-letter code: Large ribosomal subunit protein uL2 (276 aa).

Residues 224–258 are disordered; that stretch reads VAMNPVDHPHGGGEGRTGEGRVPVSPWGTPTKGYR. Residues 230 to 242 show a composition bias toward basic and acidic residues; sequence DHPHGGGEGRTGE.

Belongs to the universal ribosomal protein uL2 family. Part of the 50S ribosomal subunit. Forms a bridge to the 30S subunit in the 70S ribosome.

In terms of biological role, one of the primary rRNA binding proteins. Required for association of the 30S and 50S subunits to form the 70S ribosome, for tRNA binding and peptide bond formation. It has been suggested to have peptidyltransferase activity; this is somewhat controversial. Makes several contacts with the 16S rRNA in the 70S ribosome. This Polynucleobacter necessarius subsp. necessarius (strain STIR1) protein is Large ribosomal subunit protein uL2.